The sequence spans 306 residues: Ribonuclease H2 subunit B (306 aa).

Residues 232 to 285 (LPDLSSPTPEPPVKKRRVSDAPVEADEDYTKYNSDNKSRKSNSKMTAAQKSLAK) are disordered. Basic and acidic residues predominate over residues 259 to 269 (DYTKYNSDNKS).

Belongs to the RNase H2 subunit B family. The RNase H2 complex is a heterotrimer composed of the catalytic subunit RNASEH2A and the non-catalytic subunits RNASEH2B and RNASEH2C.

It localises to the nucleus. In terms of biological role, non catalytic subunit of RNase H2, an endonuclease that specifically degrades the RNA of RNA:DNA hybrids. Participates in DNA replication, possibly by mediating the removal of lagging-strand Okazaki fragment RNA primers during DNA replication. Mediates the excision of single ribonucleotides from DNA:RNA duplexes. This chain is Ribonuclease H2 subunit B (rnaseh2b), found in Xenopus laevis (African clawed frog).